We begin with the raw amino-acid sequence, 243 residues long: Arginine transport ATP-binding protein ArtP (243 aa).

Residues 3-242 form the ABC transporter domain; sequence IRVKNLNFFY…KTEQFKHYLS (240 aa). ATP is bound at residue 35 to 42; the sequence is GPSGAGKS.

This sequence belongs to the ABC transporter superfamily. The complex is composed of two ATP-binding proteins (ArtP), two transmembrane proteins (ArtM and ArtQ) and a solute-binding protein (ArtI).

It localises to the cell inner membrane. The catalysed reaction is a polar amino acid(out) + ATP + H2O = a polar amino acid(in) + ADP + phosphate + H(+). It carries out the reaction L-arginine(out) + ATP + H2O = L-arginine(in) + ADP + phosphate + H(+). Functionally, part of the ABC transporter complex ArtPIQM involved in arginine transport. Probably responsible for energy coupling to the transport system. This is Arginine transport ATP-binding protein ArtP (artP) from Haemophilus influenzae (strain ATCC 51907 / DSM 11121 / KW20 / Rd).